A 549-amino-acid polypeptide reads, in one-letter code: MYMEISSASDDSIAYVETDPSGRYGRFREVLGKGAMKTVYKAFDQVLGMEVAWNQVKLNEVFRSPEPLQRLYSEVHLLKNLNHESIIRYCTSWIDVNRRTFNFITELFTSGTLREYRRKYQKVDIRAIKSWARQILNGLAYLHGHDPPVIHRDLKCDNIFVNGHLGQVKIGDLGLAAILRGSQNAHSVIGTPEFMAPELYEEDYNELVDIYSFGMCVLEMLTGEYPYSECTNPAQIYKKVTSGKLPDSFHLIQHTEAQRFVGKCLETVSRRLPAKELLADPFLAATDERDLAPLFRLPQQLAIQNLAANGTVVEHLPSTTDPTRTTDMSITGKMNSEDHTIFLQVQILDGDGHMRNIQFPFNILSDTPLEVALEMVKELEITDWDPLEIAAMIENEISLLVPNWRANDSSIRHESFGHEDDEDNGDTEGRTRLFSSASSSHDSPVAVRENNDDSSNDVIPDMDDGNRSSNRLLNSSTYHYSPAIDDDQNQQQRRRVRLQQKMRSLVDTRTQVLHRSLMELINKRRGRGFDPNTNELQPQPSSTDFIRRC.

The Protein kinase domain occupies glycine 25–leucine 283. Residues threonine 105–phenylalanine 108 and lysine 155 each bind ATP. The active-site Proton acceptor is aspartate 172. The disordered stretch occupies residues glutamate 414 to glutamine 490. The segment covering aspartate 452–aspartate 463 has biased composition (acidic residues). The span at arginine 467–serine 476 shows a compositional bias: low complexity. Serine 504 carries the post-translational modification Phosphoserine. The interval arginine 525–cysteine 549 is disordered. The segment covering proline 531–cysteine 549 has biased composition (polar residues).

It belongs to the protein kinase superfamily. Ser/Thr protein kinase family. WNK subfamily. As to quaternary structure, interacts with AHK4.

The catalysed reaction is L-seryl-[protein] + ATP = O-phospho-L-seryl-[protein] + ADP + H(+). It carries out the reaction L-threonyl-[protein] + ATP = O-phospho-L-threonyl-[protein] + ADP + H(+). Its function is as follows. Regulates flowering time by modulating the photoperiod pathway. The chain is Probable serine/threonine-protein kinase WNK5 (WNK5) from Arabidopsis thaliana (Mouse-ear cress).